The following is a 560-amino-acid chain: MKVWMAILISILCWQSSAWAVCPAWSPARAQEEISRLQQQIKQWDDDYWKEGKSEVEDGVYDQLSARLTQWQRCFGNETRDVMMPPLNGAVMHPVAHTGVRKMADKNALSLWMRERSDLWVQPKVDGVAVTLVYRDGKLNKAISRGNGLKGEDWTQKVRLISAVPQTVSGPLANSTLQGEIFLQREGHIQQQMGGINARAKVAGLMMRQGNSDTLNSLAVFVWAWPDGPHLMTDRLKDLATAGFTLTQTYTRAVKNADEVAHVRNEWWKAKLPFVTDGVVVRAAKEPESRHWLPGQAEWLVAWKYQPVAQVAEVKAIQFAVGKSGKISVVASLAPVMLDDKKVQRVNIGSVRRWQEWDIAPGDQILVSLAGQGIPRIDDVVWRGAERTKPTPPENRFNSLTCYFASDVCQEQFISRLVWLGSKQVLGLDGIGEAGWRALHQTHRFEHIFSWLLLTPEQLQNTPGIAKSKSAQLWHQFNLARQQPFTRWVMAMGIPLTRAALNASDERSWSQLLFSTEQFWQQQPGTGSGRARQVIEWKENAQIKKLGSWLAAQQITGFEP.

Lys124 acts as the N6-AMP-lysine intermediate in catalysis.

It belongs to the NAD-dependent DNA ligase family. LigB subfamily.

It catalyses the reaction NAD(+) + (deoxyribonucleotide)n-3'-hydroxyl + 5'-phospho-(deoxyribonucleotide)m = (deoxyribonucleotide)n+m + AMP + beta-nicotinamide D-nucleotide.. In terms of biological role, catalyzes the formation of phosphodiester linkages between 5'-phosphoryl and 3'-hydroxyl groups in double-stranded DNA using NAD as a coenzyme and as the energy source for the reaction. The polypeptide is DNA ligase B (Escherichia coli O1:K1 / APEC).